A 262-amino-acid polypeptide reads, in one-letter code: Spindlin-1 (262 aa).

Positions 1-49 (MKTPFGKTPGQRSRADAGHAGVSANMMKKRTSHKKHRTSVGPSKPVSQP) are disordered. Glycyl lysine isopeptide (Lys-Gly) (interchain with G-Cter in SUMO2) cross-links involve residues K7 and K28. Over residues 27-38 (MKKRTSHKKHRT) the composition is skewed to basic residues. K44 is subject to N6-acetyllysine; alternate. A Glycyl lysine isopeptide (Lys-Gly) (interchain with G-Cter in SUMO2); alternate cross-link involves residue K44. The interval 53 to 116 (IVGCRIQHGW…RVSALEVLPD (64 aa)) is tudor-like domain 1. The tract at residues 93–98 (GFDCVY) is histone H3K4me3 and H3R8me2a binding. S109 and S124 each carry phosphoserine; by AURKA. Residues 132–193 (MIGKAVEHMF…DYKEGDLRIM (62 aa)) form a tudor-like domain 2 region. Residue E142 is a region of interest, histone H3K4me3 and H3R8me2a binding. S199 is modified (phosphoserine). Residues 213-262 (LVGKQVEYAKEDGSKRTGMVIHQVEAKPSVYFIKFDDDFHIYVYDLVKTS) are tudor-like domain 3. The tract at residues 250-252 (DFH) is histone H3K4me3 and H3R8me2a binding.

This sequence belongs to the SPIN/STSY family. Homodimer; may form higher-order oligomers. Interacts with TCF7L2/TCF4; the interaction is direct. Interacts with HABP4 and SERBP1. Interacts with SPINDOC; SPINDOC stabilizes SPIN1 and enhances its association with bivalent H3K4me3K9me3 mark. Interacts with SPOCD1; promoting recruitment of PIWIL4 and SPOCD1 to transposons. Phosphorylated during oocyte meiotic maturation.

The protein resides in the nucleus. Its subcellular location is the nucleolus. Chromatin reader that specifically recognizes and binds histone H3 both trimethylated at 'Lys-4' and 'Lys-9' (H3K4me3K9me3) and is involved in piRNA-mediated retrotransposon silencing during spermatogenesis. Plays a key role in the initiation of the PIWIL4-piRNA pathway, a pathway that directs transposon DNA methylation and silencing in the male embryonic germ cells, by promoting recruitment of DNA methylation machinery to transposons: binds young, but not old, LINE1 transposons, which are specifically marked with H3K4me3K9me3, and promotes the recruitment of PIWIL4 and SPOCD1 to transposons, leading to piRNA-directed DNA methylation. Also recognizes and binds histone H3 both trimethylated at 'Lys-4' and asymmetrically dimethylated at 'Arg-8' (H3K4me3 and H3R8me2a) and acts as an activator of Wnt signaling pathway downstream of PRMT2. Overexpression induces metaphase arrest and chromosomal instability. Overexpression induces metaphase arrest and chromosomal instability. Localizes to active rDNA loci and promotes the expression of rRNA genes. May play a role in cell-cycle regulation during the transition from gamete to embryo. Involved in oocyte meiotic resumption, a process that takes place before ovulation to resume meiosis of oocytes blocked in prophase I: may act by regulating maternal transcripts to control meiotic resumption. The protein is Spindlin-1 (Spin1) of Rattus norvegicus (Rat).